Consider the following 739-residue polypeptide: Double-strand break repair protein mus-23 (739 aa).

Mn(2+) is bound by residues Asp-16, His-18, Asp-56, and Asn-123. Residue His-124 is the Proton donor of the active site. The Mn(2+) site is built by His-212, His-240, and His-242. Positions 516–739 (FDAGQHKQAQ…KPGLLARRLG (224 aa)) are disordered. Basic residues predominate over residues 523–532 (QAQRTKRFKR). Over residues 559-568 (VEPKGNDRPT) the composition is skewed to basic and acidic residues. Residues 599–636 (KRGAAAKTTAAAKKAAPGKKAAPAKKAAPAKKAAPAKK) are compositionally biased toward low complexity. Over residues 637–646 (APARGRKKKT) the composition is skewed to basic residues. The span at 650 to 686 (DSDEEEEEDYPEDDDEEEEEADEEEEDVIMEDDEEDP) shows a compositional bias: acidic residues. Over residues 694-722 (KATSRVASTRASARATPVRATPARATQAR) the composition is skewed to low complexity.

Belongs to the MRE11/RAD32 family. Component of the MRN complex composed of two heterodimers RAD50 and MRE11 associated with a single NBS1. It depends on Mn(2+) as a cofactor.

It localises to the nucleus. It is found in the chromosome. The protein resides in the telomere. Its function is as follows. Core component of the MRN complex, which plays a central role in double-strand break (DSB) repair, DNA recombination, maintenance of telomere integrity and meiosis. The MRN complex is involved in the repair of DNA double-strand breaks (DSBs) via homologous recombination (HR), an error-free mechanism which primarily occurs during S and G2 phases. The complex (1) mediates the end resection of damaged DNA, which generates proper single-stranded DNA, a key initial steps in HR, and is (2) required for the recruitment of other repair factors and efficient activation of ATM and ATR upon DNA damage. Within the MRN complex, MRE11 possesses both single-strand endonuclease activity and double-strand-specific 3'-5' exonuclease activity. MRE11 first endonucleolytically cleaves the 5' strand at DNA DSB ends to prevent non-homologous end joining (NHEJ) and licence HR. It then generates a single-stranded DNA gap via 3' to 5' exonucleolytic degradation, which is required for single-strand invasion and recombination. The MRN complex is also required for the processing of R-loops. The chain is Double-strand break repair protein mus-23 (mus-23) from Neurospora crassa (strain ATCC 24698 / 74-OR23-1A / CBS 708.71 / DSM 1257 / FGSC 987).